The following is a 274-amino-acid chain: MTEQVRVAITGGSGRMGRTLIEAAKQNELILLGAAIERAGSTLMGVDAGELAGVGAMNVAITDSLDKAVDDFDVLIDFTSPEASVVHTDWCARNGKAIVIGTTGFNHAQKEQISAYGDQIPIVMAPNMAVGVNLMWKLLEVAAEVMGDYCDIEIIEGHHRYKKDAPSGTALKMGEVIAETLGRDLEKCAVYGREGITGERDRGTIGFATVRAGDIVGEHTALFADIGERLEITHKASSRMTFANGAMRAATWLVEQDAGLYDMQQVLGLKGITI.

Residues 11–16 (GGSGRM) and E37 contribute to the NAD(+) site. NADP(+) is bound at residue R38. NAD(+) contacts are provided by residues 101–103 (GTT) and 125–128 (APNM). H158 serves as the catalytic Proton donor/acceptor. A (S)-2,3,4,5-tetrahydrodipicolinate-binding site is contributed by H159. The Proton donor role is filled by K162. 168–169 (GT) contributes to the (S)-2,3,4,5-tetrahydrodipicolinate binding site.

Belongs to the DapB family.

Its subcellular location is the cytoplasm. It catalyses the reaction (S)-2,3,4,5-tetrahydrodipicolinate + NAD(+) + H2O = (2S,4S)-4-hydroxy-2,3,4,5-tetrahydrodipicolinate + NADH + H(+). The enzyme catalyses (S)-2,3,4,5-tetrahydrodipicolinate + NADP(+) + H2O = (2S,4S)-4-hydroxy-2,3,4,5-tetrahydrodipicolinate + NADPH + H(+). The protein operates within amino-acid biosynthesis; L-lysine biosynthesis via DAP pathway; (S)-tetrahydrodipicolinate from L-aspartate: step 4/4. Catalyzes the conversion of 4-hydroxy-tetrahydrodipicolinate (HTPA) to tetrahydrodipicolinate. The chain is 4-hydroxy-tetrahydrodipicolinate reductase from Shewanella pealeana (strain ATCC 700345 / ANG-SQ1).